The following is a 529-amino-acid chain: Bifunctional purine biosynthesis protein PurH (529 aa).

Positions 2 to 148 constitute an MGS-like domain; it reads QHLRPIRRAL…KNHKDVTIVV (147 aa).

Belongs to the PurH family.

The catalysed reaction is (6R)-10-formyltetrahydrofolate + 5-amino-1-(5-phospho-beta-D-ribosyl)imidazole-4-carboxamide = 5-formamido-1-(5-phospho-D-ribosyl)imidazole-4-carboxamide + (6S)-5,6,7,8-tetrahydrofolate. It catalyses the reaction IMP + H2O = 5-formamido-1-(5-phospho-D-ribosyl)imidazole-4-carboxamide. It functions in the pathway purine metabolism; IMP biosynthesis via de novo pathway; 5-formamido-1-(5-phospho-D-ribosyl)imidazole-4-carboxamide from 5-amino-1-(5-phospho-D-ribosyl)imidazole-4-carboxamide (10-formyl THF route): step 1/1. It participates in purine metabolism; IMP biosynthesis via de novo pathway; IMP from 5-formamido-1-(5-phospho-D-ribosyl)imidazole-4-carboxamide: step 1/1. The chain is Bifunctional purine biosynthesis protein PurH from Proteus mirabilis (strain HI4320).